Consider the following 1145-residue polypeptide: Adenylate cyclase type 3 (1145 aa).

Residues 1 to 79 (MPRNQGFSDP…FKRQRHETLL (79 aa)) lie on the Cytoplasmic side of the membrane. The next 5 helical transmembrane spans lie at 80 to 100 (VLVVFAALFDCYVVVMCAVVF), 105 to 125 (LAPLMVAGFGLVLDIILFVLC), 139 to 159 (VPYLLWLLISAQIFSYLGLNF), 173 to 193 (AFFVFSFFITLPLSLSPIVII), and 226 to 246 (ILANVFLYLCAIIVGIMSYYM). The Mg(2+) site is built by Asp-324, Ile-325, and Asp-368. ATP-binding positions include 324–329 (DIVGFT) and 366–368 (LGD). The helical transmembrane segment at 381 to 401 (EDHAVCSILMGLAMVEAISYV) threads the bilayer. Residues 402 to 631 (REKTKTGVDM…RYSVEKEKQS (230 aa)) are Cytoplasmic-facing. Arg-412 contributes to the ATP binding site. Residue Lys-465 forms a Glycyl lysine isopeptide (Lys-Gly) (interchain with G-Cter in SUMO3) linkage. A disordered region spans residues 504 to 564 (QNGLNGSAVP…DNPSFPNPRR (61 aa)). 2 stretches are compositionally biased toward low complexity: residues 516-526 (APASSKPSSPA) and 535-544 (GSAHASGSTS). Position 524 is a phosphoserine (Ser-524). Ser-579 is subject to Phosphoserine. A run of 3 helical transmembrane segments spans residues 632–652 (GAAFSCSCVVLFCTAMVEILI), 663–683 (FVVGEVLLLILTICSMAAIFP), and 707–727 (WAMLAIFILVMANVVDMLSCL). N-linked (GlcNAc...) asparagine glycosylation occurs at Asn-735. 3 consecutive transmembrane segments (helical) span residues 753–773 (YNYVAVLSLIATIMLVQVSHM), 774–794 (VKLTLMLLVTGAVTALNLYAW), and 834–854 (LPLVPSKYSMTVMMFVMMLSF). The Cytoplasmic segment spans residues 855–1145 (YYFSRHVEKL…TLPHQVVDNP (291 aa)). ATP-binding positions include Lys-976, 1063–1065 (DIW), and 1070–1074 (NVASR). Ser-1077 bears the Phosphoserine; by CaMK2 mark. An ATP-binding site is contributed by Lys-1110.

The protein belongs to the adenylyl cyclase class-4/guanylyl cyclase family. Requires Mg(2+) as cofactor. It depends on Mn(2+) as a cofactor. In terms of processing, N-glycosylated. Post-translationally, rapidly phosphorylated after stimulation by odorants or forskolin. Phosphorylation by CaMK2 at Ser-1077 down-regulates enzyme activity. Sumoylated. Sumoylation is required for targeting of olfactory cilia. Detected in the acrosomal region of epididymal spermatozoa, the acrosomal region of round spermatids and in elongating spermatids. Detected in cilia in the olfactory epithelium (at protein level). Detected in olfactory epithelium neurons. Detected in brain, testis, late pachytene spermatocytes, round spermatids and elongating spermatids.

The protein resides in the cell membrane. Its subcellular location is the cell projection. The protein localises to the cilium. It is found in the golgi apparatus. It localises to the cytoplasm. The catalysed reaction is ATP = 3',5'-cyclic AMP + diphosphate. Specifically activated by the G alpha protein GNAL/G(olf) in signaling cascades triggered by odorant receptors. Activated by forskolin. After forskolin treatment, activity is further increased by calcium/calmodulin. In the absence of forskolin, calcium/calmodulin has little effect on enzyme activity. In terms of biological role, catalyzes the formation of the signaling molecule cAMP in response to G-protein signaling. Participates in signaling cascades triggered by odorant receptors via its function in cAMP biosynthesis: specifically activated by G alpha protein GNAL/G(olf) in olfactory epithelium. Required for the perception of odorants. Required for normal sperm motility and normal male fertility. Plays a role in regulating insulin levels and body fat accumulation in response to a high fat diet. This Mus musculus (Mouse) protein is Adenylate cyclase type 3 (Adcy3).